Reading from the N-terminus, the 49-residue chain is MRVNVTLACTETGDRNYITTKNKRTNPDRLEMKKYSPRLKKYTLHRETK.

The protein belongs to the bacterial ribosomal protein bL33 family.

This is Large ribosomal subunit protein bL33B from Bacillus velezensis (strain DSM 23117 / BGSC 10A6 / LMG 26770 / FZB42) (Bacillus amyloliquefaciens subsp. plantarum).